The primary structure comprises 101 residues: Co-chaperonin GroES 1 (101 aa).

It belongs to the GroES chaperonin family. As to quaternary structure, heptamer of 7 subunits arranged in a ring. Interacts with the chaperonin GroEL.

The protein localises to the cytoplasm. In terms of biological role, together with the chaperonin GroEL, plays an essential role in assisting protein folding. The GroEL-GroES system forms a nano-cage that allows encapsulation of the non-native substrate proteins and provides a physical environment optimized to promote and accelerate protein folding. GroES binds to the apical surface of the GroEL ring, thereby capping the opening of the GroEL channel. The chain is Co-chaperonin GroES 1 from Rhodopirellula baltica (strain DSM 10527 / NCIMB 13988 / SH1).